A 165-amino-acid polypeptide reads, in one-letter code: Large ribosomal subunit protein uL30 (165 aa).

Belongs to the universal ribosomal protein uL30 family. In terms of assembly, part of the 50S ribosomal subunit.

The polypeptide is Large ribosomal subunit protein uL30 (Thermoplasma acidophilum (strain ATCC 25905 / DSM 1728 / JCM 9062 / NBRC 15155 / AMRC-C165)).